A 422-amino-acid polypeptide reads, in one-letter code: Histidine--tRNA ligase (422 aa).

It belongs to the class-II aminoacyl-tRNA synthetase family. As to quaternary structure, homodimer.

The protein resides in the cytoplasm. The catalysed reaction is tRNA(His) + L-histidine + ATP = L-histidyl-tRNA(His) + AMP + diphosphate + H(+). This is Histidine--tRNA ligase from Onion yellows phytoplasma (strain OY-M).